A 469-amino-acid polypeptide reads, in one-letter code: Biotin synthase (469 aa).

The 228-residue stretch at 51-278 folds into the Radical SAM core domain; the sequence is MTVKVNYLVN…DKEIRMAGGR (228 aa). Residues C66, C70, and C73 each coordinate [4Fe-4S] cluster. 4 residues coordinate [2Fe-2S] cluster: C110, C143, C203, and R273. Positions 326–469 are disordered; that stretch reads AGPDPSRDRH…GAGTSVAPNA (144 aa). Low complexity-rich tracts occupy residues 363–384 and 405–428; these read GSAA…APAD and AGGP…MSPA.

This sequence belongs to the radical SAM superfamily. Biotin synthase family. In terms of assembly, homodimer. Requires [4Fe-4S] cluster as cofactor. It depends on [2Fe-2S] cluster as a cofactor.

The enzyme catalyses (4R,5S)-dethiobiotin + (sulfur carrier)-SH + 2 reduced [2Fe-2S]-[ferredoxin] + 2 S-adenosyl-L-methionine = (sulfur carrier)-H + biotin + 2 5'-deoxyadenosine + 2 L-methionine + 2 oxidized [2Fe-2S]-[ferredoxin]. It functions in the pathway cofactor biosynthesis; biotin biosynthesis; biotin from 7,8-diaminononanoate: step 2/2. Catalyzes the conversion of dethiobiotin (DTB) to biotin by the insertion of a sulfur atom into dethiobiotin via a radical-based mechanism. This is Biotin synthase from Kocuria rhizophila (strain ATCC 9341 / DSM 348 / NBRC 103217 / DC2201).